The following is a 124-amino-acid chain: MAGGVGAQIVGRHIYGNLYGCEQQILKDEAALITIVKEAAKVANAILLSIGSYRFGPEGGLTVFAVVAESHISIHTWPEHGFATVDVYTCGDHTDPKAAFDYIVSKLKPRKVEAFFGDRSMYRE.

Residue serine 70 is the Schiff-base intermediate with substrate; via pyruvic acid of the active site. The residue at position 70 (serine 70) is a Pyruvic acid (Ser); by autocatalysis. The active-site Proton acceptor; for processing activity is the histidine 75. The active-site Proton donor; for catalytic activity is the cysteine 90.

It belongs to the prokaryotic AdoMetDC family. Type 1 subfamily. In terms of assembly, heterotetramer of two alpha and two beta chains arranged as a dimer of alpha/beta heterodimers. Requires pyruvate as cofactor. In terms of processing, is synthesized initially as an inactive proenzyme. Formation of the active enzyme involves a self-maturation process in which the active site pyruvoyl group is generated from an internal serine residue via an autocatalytic post-translational modification. Two non-identical subunits are generated from the proenzyme in this reaction, and the pyruvate is formed at the N-terminus of the alpha chain, which is derived from the carboxyl end of the proenzyme. The post-translation cleavage follows an unusual pathway, termed non-hydrolytic serinolysis, in which the side chain hydroxyl group of the serine supplies its oxygen atom to form the C-terminus of the beta chain, while the remainder of the serine residue undergoes an oxidative deamination to produce ammonia and the pyruvoyl group blocking the N-terminus of the alpha chain.

It carries out the reaction S-adenosyl-L-methionine + H(+) = S-adenosyl 3-(methylsulfanyl)propylamine + CO2. It participates in amine and polyamine biosynthesis; S-adenosylmethioninamine biosynthesis; S-adenosylmethioninamine from S-adenosyl-L-methionine: step 1/1. Catalyzes the decarboxylation of S-adenosylmethionine to S-adenosylmethioninamine (dcAdoMet), the propylamine donor required for the synthesis of the polyamines spermine and spermidine from the diamine putrescine. The chain is S-adenosylmethionine decarboxylase proenzyme from Pyrobaculum neutrophilum (strain DSM 2338 / JCM 9278 / NBRC 100436 / V24Sta) (Thermoproteus neutrophilus).